The following is a 243-amino-acid chain: HTH-type transcriptional regulator MlrA (243 aa).

Residues 3–72 (LYTIGEVALL…VSKVKMLLSN (70 aa)) form the HTH merR-type domain. Positions 6–25 (IGEVALLCDINPVTLRAWQR) form a DNA-binding region, H-T-H motif.

As to quaternary structure, interacts with DgcM and PdeR.

Activity is regulated by DgcM and PdeR. Functionally, activates transcription of csgD, the master regulator of biofilm formation, by binding to its promoter region. Also controls the transcription of cadC and ibaG. Part of a signaling cascade that regulates curli biosynthesis. The cascade is composed of two c-di-GMP control modules, in which c-di-GMP controlled by the DgcE/PdeH pair (module I) regulates the activity of the DgcM/PdeR pair (module II), which in turn regulates activity of the transcription factor MlrA. This Escherichia coli (strain K12) protein is HTH-type transcriptional regulator MlrA.